A 194-amino-acid polypeptide reads, in one-letter code: FMN-dependent NADH:quinone oxidoreductase (194 aa).

FMN contacts are provided by residues serine 9, 15–17 (SIS), and 85–88 (MYNF).

The protein belongs to the azoreductase type 1 family. Homodimer. Requires FMN as cofactor.

It carries out the reaction 2 a quinone + NADH + H(+) = 2 a 1,4-benzosemiquinone + NAD(+). It catalyses the reaction N,N-dimethyl-1,4-phenylenediamine + anthranilate + 2 NAD(+) = 2-(4-dimethylaminophenyl)diazenylbenzoate + 2 NADH + 2 H(+). In terms of biological role, quinone reductase that provides resistance to thiol-specific stress caused by electrophilic quinones. Functionally, also exhibits azoreductase activity. Catalyzes the reductive cleavage of the azo bond in aromatic azo compounds to the corresponding amines. This Xanthomonas oryzae pv. oryzae (strain MAFF 311018) protein is FMN-dependent NADH:quinone oxidoreductase.